The following is a 318-amino-acid chain: Inactive dihydropteroate synthase 2 (318 aa).

A disordered region spans residues 1–25 (MRSTPPASAGRSTPPALAGHSTPPA). A Pterin-binding domain is found at 42 to 299 (ALIMAIVNRT…EVAATRRVLE (258 aa)).

This sequence belongs to the DHPS family. As to quaternary structure, homodimer.

Has very low affinity for the DHPS substrate 6-hydroxymethyl-7,8-dihydropterin-pyrophosphate, but can bind the inhibitor dapsone. Seems to lack dihydropteroate synthase activity, and does probably not function in folate metabolism. This chain is Inactive dihydropteroate synthase 2 (folP2), found in Mycobacterium bovis (strain ATCC BAA-935 / AF2122/97).